A 477-amino-acid chain; its full sequence is Glycogen synthase (477 aa).

Lysine 15 provides a ligand contact to ADP-alpha-D-glucose.

This sequence belongs to the glycosyltransferase 1 family. Bacterial/plant glycogen synthase subfamily.

It catalyses the reaction [(1-&gt;4)-alpha-D-glucosyl](n) + ADP-alpha-D-glucose = [(1-&gt;4)-alpha-D-glucosyl](n+1) + ADP + H(+). It functions in the pathway glycan biosynthesis; glycogen biosynthesis. Synthesizes alpha-1,4-glucan chains using ADP-glucose. This is Glycogen synthase from Clostridium acetobutylicum (strain ATCC 824 / DSM 792 / JCM 1419 / IAM 19013 / LMG 5710 / NBRC 13948 / NRRL B-527 / VKM B-1787 / 2291 / W).